Consider the following 458-residue polypeptide: Argininosuccinate lyase (458 aa).

It belongs to the lyase 1 family. Argininosuccinate lyase subfamily.

It is found in the cytoplasm. It carries out the reaction 2-(N(omega)-L-arginino)succinate = fumarate + L-arginine. The protein operates within amino-acid biosynthesis; L-arginine biosynthesis; L-arginine from L-ornithine and carbamoyl phosphate: step 3/3. This is Argininosuccinate lyase from Salmonella choleraesuis (strain SC-B67).